Reading from the N-terminus, the 217-residue chain is Octanoyltransferase (217 aa).

A BPL/LPL catalytic domain is found at 30-209; sequence GNRPPTLLLL…AFAEVFGLRP (180 aa). Substrate is bound by residues 75–82, 139–141, and 152–154; these read RGGDVTYH, AIG, and GFA. Cys170 acts as the Acyl-thioester intermediate in catalysis.

The protein belongs to the LipB family.

Its subcellular location is the cytoplasm. It catalyses the reaction octanoyl-[ACP] + L-lysyl-[protein] = N(6)-octanoyl-L-lysyl-[protein] + holo-[ACP] + H(+). The protein operates within protein modification; protein lipoylation via endogenous pathway; protein N(6)-(lipoyl)lysine from octanoyl-[acyl-carrier-protein]: step 1/2. Catalyzes the transfer of endogenously produced octanoic acid from octanoyl-acyl-carrier-protein onto the lipoyl domains of lipoate-dependent enzymes. Lipoyl-ACP can also act as a substrate although octanoyl-ACP is likely to be the physiological substrate. The protein is Octanoyltransferase of Thermus thermophilus (strain ATCC 27634 / DSM 579 / HB8).